Reading from the N-terminus, the 437-residue chain is Chromosomal replication initiator protein DnaA (437 aa).

The segment at 1-82 is domain I, interacts with DnaA modulators; it reads MIFPIWKKCL…KIIINIEKKK (82 aa). The tract at residues 82–101 is domain II; it reads KLEKKKCIYKKKNIQIYLHS. The interval 102–318 is domain III, AAA+ region; sequence EINKKYQFHN…GILKKIQILS (217 aa). 4 residues coordinate ATP: G146, G148, K149, and T150. The domain IV, binds dsDNA stretch occupies residues 319-437; the sequence is ILNKEKITIN…FIYLFNQLNA (119 aa).

It belongs to the DnaA family. Oligomerizes as a right-handed, spiral filament on DNA at oriC.

Its subcellular location is the cytoplasm. In terms of biological role, plays an essential role in the initiation and regulation of chromosomal replication. ATP-DnaA binds to the origin of replication (oriC) to initiate formation of the DNA replication initiation complex once per cell cycle. Binds the DnaA box (a 9 base pair repeat at the origin) and separates the double-stranded (ds)DNA. Forms a right-handed helical filament on oriC DNA; dsDNA binds to the exterior of the filament while single-stranded (ss)DNA is stabiized in the filament's interior. The ATP-DnaA-oriC complex binds and stabilizes one strand of the AT-rich DNA unwinding element (DUE), permitting loading of DNA polymerase. After initiation quickly degrades to an ADP-DnaA complex that is not apt for DNA replication. Binds acidic phospholipids. This chain is Chromosomal replication initiator protein DnaA, found in Buchnera aphidicola subsp. Cinara cedri (strain Cc).